We begin with the raw amino-acid sequence, 245 residues long: Purine nucleoside phosphorylase (245 aa).

Histidine 8 contributes to the a purine D-ribonucleoside binding site. Phosphate is bound by residues 24-28 (GDPGR), arginine 46, and 89-92 (RAGS). 184-185 (ME) provides a ligand contact to a purine D-ribonucleoside. Aspartate 207 serves as the catalytic Proton donor.

It belongs to the PNP/MTAP phosphorylase family. Homohexamer; trimer of homodimers.

The catalysed reaction is inosine + phosphate = alpha-D-ribose 1-phosphate + hypoxanthine. It catalyses the reaction guanosine + phosphate = alpha-D-ribose 1-phosphate + guanine. The enzyme catalyses 2'-deoxyguanosine + phosphate = 2-deoxy-alpha-D-ribose 1-phosphate + guanine. It carries out the reaction 2'-deoxyinosine + phosphate = 2-deoxy-alpha-D-ribose 1-phosphate + hypoxanthine. Its pathway is purine metabolism; purine nucleoside salvage. Its function is as follows. As part of the purine salvage pathway, catalyzes the phosphorolytic breakdown of the N-glycosidic bond in the beta-(deoxy)ribonucleoside molecules, with the formation of the corresponding free purine bases and pentose-1-phosphate. Preferentially acts on inosine and guanosine, and to a lesser extent on 2'-deoxyinosine and 2'-deoxyguanosine. The protein is Purine nucleoside phosphorylase of Plasmodium vivax (strain Salvador I).